A 202-amino-acid chain; its full sequence is Holliday junction branch migration complex subunit RuvA (202 aa).

A domain I region spans residues 1–62 (MIGYLRGRLH…EDAMELYGFT (62 aa)). The segment at 63 to 141 (RPEELHLFTL…KSGLVDGTET (79 aa)) is domain II. Positions 141-145 (TEAIP) are flexible linker. Residues 146 to 202 (AGGGDNDEALAALLALGYSREEIGPILARVRQELGNAAPTTAVLQAVLKTFGRGGGD) form a domain III region.

Belongs to the RuvA family. In terms of assembly, homotetramer. Forms an RuvA(8)-RuvB(12)-Holliday junction (HJ) complex. HJ DNA is sandwiched between 2 RuvA tetramers; dsDNA enters through RuvA and exits via RuvB. An RuvB hexamer assembles on each DNA strand where it exits the tetramer. Each RuvB hexamer is contacted by two RuvA subunits (via domain III) on 2 adjacent RuvB subunits; this complex drives branch migration. In the full resolvosome a probable DNA-RuvA(4)-RuvB(12)-RuvC(2) complex forms which resolves the HJ.

It localises to the cytoplasm. The RuvA-RuvB-RuvC complex processes Holliday junction (HJ) DNA during genetic recombination and DNA repair, while the RuvA-RuvB complex plays an important role in the rescue of blocked DNA replication forks via replication fork reversal (RFR). RuvA specifically binds to HJ cruciform DNA, conferring on it an open structure. The RuvB hexamer acts as an ATP-dependent pump, pulling dsDNA into and through the RuvAB complex. HJ branch migration allows RuvC to scan DNA until it finds its consensus sequence, where it cleaves and resolves the cruciform DNA. In Moorella thermoacetica (strain ATCC 39073 / JCM 9320), this protein is Holliday junction branch migration complex subunit RuvA.